The following is a 138-amino-acid chain: MTKPISRIGSRRNVRIGSRKSGRRIPKGVIHVQASFNNTIVTVTDIRGRVVSWSSAGTCGFRGTRRGTPFAAQTAASNAIRTVVDQGMQRAEVRIKGPGLGRDAALRAIRRSGILLSFVRDVTPMPHNGCRPPKKRRV.

Belongs to the universal ribosomal protein uS11 family. In terms of assembly, part of the 30S ribosomal subunit.

Its subcellular location is the plastid. It is found in the chloroplast. This is Small ribosomal subunit protein uS11c from Nandina domestica (Heavenly bamboo).